A 384-amino-acid chain; its full sequence is Spermidine/putrescine import ATP-binding protein PotA (384 aa).

The ABC transporter domain occupies 26-260; sequence ISLEKVSKTY…PATRFVAGFI (235 aa). Position 62-69 (62-69) interacts with ATP; that stretch reads GPSGCGKT.

It belongs to the ABC transporter superfamily. Spermidine/putrescine importer (TC 3.A.1.11.1) family. In terms of assembly, the complex is composed of two ATP-binding proteins (PotA), two transmembrane proteins (PotB and PotC) and a solute-binding protein (PotD).

The protein resides in the cell membrane. It catalyses the reaction ATP + H2O + polyamine-[polyamine-binding protein]Side 1 = ADP + phosphate + polyamineSide 2 + [polyamine-binding protein]Side 1.. In terms of biological role, part of the ABC transporter complex PotABCD involved in spermidine/putrescine import. Responsible for energy coupling to the transport system. This chain is Spermidine/putrescine import ATP-binding protein PotA, found in Thermobifida fusca (strain YX).